A 345-amino-acid chain; its full sequence is N-acetyl-gamma-glutamyl-phosphate reductase (345 aa).

Cys149 is an active-site residue.

The protein belongs to the NAGSA dehydrogenase family. Type 1 subfamily.

It is found in the cytoplasm. It carries out the reaction N-acetyl-L-glutamate 5-semialdehyde + phosphate + NADP(+) = N-acetyl-L-glutamyl 5-phosphate + NADPH + H(+). It functions in the pathway amino-acid biosynthesis; L-arginine biosynthesis; N(2)-acetyl-L-ornithine from L-glutamate: step 3/4. Functionally, catalyzes the NADPH-dependent reduction of N-acetyl-5-glutamyl phosphate to yield N-acetyl-L-glutamate 5-semialdehyde. The chain is N-acetyl-gamma-glutamyl-phosphate reductase from Janthinobacterium sp. (strain Marseille) (Minibacterium massiliensis).